The sequence spans 185 residues: Ribosome maturation factor RimM (185 aa).

The 76-residue stretch at 108–183 folds into the PRC barrel domain; sequence PGEFHVTDLL…RLEIKTIPGL (76 aa).

It belongs to the RimM family. As to quaternary structure, binds ribosomal protein uS19.

The protein localises to the cytoplasm. Its function is as follows. An accessory protein needed during the final step in the assembly of 30S ribosomal subunit, possibly for assembly of the head region. Essential for efficient processing of 16S rRNA. May be needed both before and after RbfA during the maturation of 16S rRNA. It has affinity for free ribosomal 30S subunits but not for 70S ribosomes. The protein is Ribosome maturation factor RimM of Synechocystis sp. (strain ATCC 27184 / PCC 6803 / Kazusa).